Here is a 186-residue protein sequence, read N- to C-terminus: Cell division protein SepF (186 aa).

Residues 24–91 (EDEEEEERYA…HNPPHLRAVP (68 aa)) form a disordered region.

This sequence belongs to the SepF family. As to quaternary structure, homodimer. Interacts with FtsZ.

It localises to the cytoplasm. Its function is as follows. Cell division protein that is part of the divisome complex and is recruited early to the Z-ring. Probably stimulates Z-ring formation, perhaps through the cross-linking of FtsZ protofilaments. Its function overlaps with FtsA. In Rubrobacter xylanophilus (strain DSM 9941 / JCM 11954 / NBRC 16129 / PRD-1), this protein is Cell division protein SepF.